The primary structure comprises 89 residues: Small ribosomal subunit protein uS14A (89 aa).

It belongs to the universal ribosomal protein uS14 family. In terms of assembly, part of the 30S ribosomal subunit. Contacts proteins S3 and S10.

In terms of biological role, binds 16S rRNA, required for the assembly of 30S particles and may also be responsible for determining the conformation of the 16S rRNA at the A site. The polypeptide is Small ribosomal subunit protein uS14A (Streptococcus equi subsp. zooepidemicus (strain MGCS10565)).